The sequence spans 180 residues: Shikimate kinase (180 aa).

14–19 (GAGKSS) contributes to the ATP binding site. Residue Ser-18 coordinates Mg(2+). Substrate contacts are provided by Asp-36, Arg-60, and Gly-82. ATP is bound at residue Arg-120. Residue Arg-139 participates in substrate binding.

The protein belongs to the shikimate kinase family. As to quaternary structure, monomer. Requires Mg(2+) as cofactor.

Its subcellular location is the cytoplasm. It carries out the reaction shikimate + ATP = 3-phosphoshikimate + ADP + H(+). The protein operates within metabolic intermediate biosynthesis; chorismate biosynthesis; chorismate from D-erythrose 4-phosphate and phosphoenolpyruvate: step 5/7. Its function is as follows. Catalyzes the specific phosphorylation of the 3-hydroxyl group of shikimic acid using ATP as a cosubstrate. The sequence is that of Shikimate kinase from Xylella fastidiosa (strain 9a5c).